Consider the following 189-residue polypeptide: GTP cyclohydrolase 1 (189 aa).

Positions 79, 82, and 151 each coordinate Zn(2+).

It belongs to the GTP cyclohydrolase I family. Toroid-shaped homodecamer, composed of two pentamers of five dimers.

It carries out the reaction GTP + H2O = 7,8-dihydroneopterin 3'-triphosphate + formate + H(+). The protein operates within cofactor biosynthesis; 7,8-dihydroneopterin triphosphate biosynthesis; 7,8-dihydroneopterin triphosphate from GTP: step 1/1. The protein is GTP cyclohydrolase 1 of Lactiplantibacillus plantarum (strain ATCC BAA-793 / NCIMB 8826 / WCFS1) (Lactobacillus plantarum).